The sequence spans 417 residues: MLDLRYITENTEDLKKVLELRGFKEIGIIDELKSIIQRKREFQKEADILREERNKASKEVGKIKQSGGDITKISASVKLVGEKIKEIESKLEQEENALLNINLGLPNILDPKVPPGKSEHDNIVQYEVGKIPTFQFVPKTHFEIGEALHWIDFEKGVKLSGARAYTYWKDGARLERALMNFMLDVHTKEHDYTEVWVPSMVNDESMMATGQYPKFKDEFYRIDKDELNLIPTAEVPLTNLYRDEIIPEDQLPISVTAHTSCFRREAGSYGKDTRGLVRVHQFQKVELVKFCKPEDSEEEHKKMLSHAENILKKLELPYRVIILCSGDISANSSITYDIEVWMPGLNRYMEISSVSNFRDFQARRGKIRYKSKDGKNQLVHTINGSGLALGRTYAAILENFQNEDGTLRIPEVLKSYF.

Position 232-234 (T232–E234) interacts with L-serine. ATP contacts are provided by residues R263–E265 and V279. E286 is an L-serine binding site. Position 350–353 (E350–S353) interacts with ATP. S385 is an L-serine binding site.

It belongs to the class-II aminoacyl-tRNA synthetase family. Type-1 seryl-tRNA synthetase subfamily. In terms of assembly, homodimer. The tRNA molecule binds across the dimer.

It localises to the cytoplasm. The enzyme catalyses tRNA(Ser) + L-serine + ATP = L-seryl-tRNA(Ser) + AMP + diphosphate + H(+). It carries out the reaction tRNA(Sec) + L-serine + ATP = L-seryl-tRNA(Sec) + AMP + diphosphate + H(+). It participates in aminoacyl-tRNA biosynthesis; selenocysteinyl-tRNA(Sec) biosynthesis; L-seryl-tRNA(Sec) from L-serine and tRNA(Sec): step 1/1. Catalyzes the attachment of serine to tRNA(Ser). Is also able to aminoacylate tRNA(Sec) with serine, to form the misacylated tRNA L-seryl-tRNA(Sec), which will be further converted into selenocysteinyl-tRNA(Sec). In Leptospira interrogans serogroup Icterohaemorrhagiae serovar copenhageni (strain Fiocruz L1-130), this protein is Serine--tRNA ligase.